The chain runs to 123 residues: Putative acidic leucine-rich nuclear phosphoprotein 32 family member C (123 aa).

LRR repeat units follow at residues 43–64 (ELEFLSTINVGLTFISNLPKLN), 65–87 (KLKKLELSENRISGDLEVLAEKC), 89–110 (NLKHLNLSGNKIKDLSTIELLK), and 114–123 (NLKSLDLFNC).

This sequence belongs to the ANP32 family.

This Mus musculus (Mouse) protein is Putative acidic leucine-rich nuclear phosphoprotein 32 family member C (Anp32c).